A 72-amino-acid chain; its full sequence is Large ribosomal subunit protein uL29 (72 aa).

This sequence belongs to the universal ribosomal protein uL29 family.

In Rhodopirellula baltica (strain DSM 10527 / NCIMB 13988 / SH1), this protein is Large ribosomal subunit protein uL29.